A 68-amino-acid polypeptide reads, in one-letter code: Non-disulfide-bridged peptide 5.6 (68 aa).

The signal sequence occupies residues 1 to 23 (MKTQVIIFIMAVVFLQLLSQSEA). The propeptide occupies 37–68 (ELRNIDLDQFDDMFDEPEISAADMRFLQELLK).

Belongs to the non-disulfide-bridged peptide (NDBP) superfamily. Short antimicrobial peptide (group 4) family. Expressed by the venom gland.

It localises to the secreted. The protein localises to the target cell membrane. In terms of biological role, antibacterial peptide with activity against both Gram-positive and Gram-negative bacteria probably by forming pores in the cell membrane. Also has weak hemolytic activity. Does not show antifungal activity. This Hoffmannihadrurus gertschi (Scorpion) protein is Non-disulfide-bridged peptide 5.6.